The primary structure comprises 436 residues: UPF0597 protein YhaM (436 aa).

The protein belongs to the UPF0597 family.

This Salmonella paratyphi C (strain RKS4594) protein is UPF0597 protein YhaM.